Here is a 180-residue protein sequence, read N- to C-terminus: 3-deoxy-D-manno-octulosonate 8-phosphate phosphatase KdsC (180 aa).

Mg(2+)-binding residues include Asp14 and Asp16. Substrate contacts are provided by residues Asp16, 37 to 41 (HVRDG), Lys45, Arg60, Arg68, and Lys84. Asp107 contacts Mg(2+).

It belongs to the KdsC family. Homotetramer. Mg(2+) is required as a cofactor.

The catalysed reaction is 3-deoxy-alpha-D-manno-2-octulosonate-8-phosphate + H2O = 3-deoxy-alpha-D-manno-oct-2-ulosonate + phosphate. Functionally, catalyzes the hydrolysis of 3-deoxy-D-manno-octulosonate 8-phosphate (KDO 8-P) to 3-deoxy-D-manno-octulosonate (KDO) and inorganic phosphate. The protein is 3-deoxy-D-manno-octulosonate 8-phosphate phosphatase KdsC of Haemophilus influenzae (strain ATCC 51907 / DSM 11121 / KW20 / Rd).